The chain runs to 320 residues: Lipoyl synthase (320 aa).

Positions 9-31 are disordered; the sequence is ANDARPRHPEKAHRPDQPIQRKP. The segment covering 12–31 has biased composition (basic and acidic residues); it reads ARPRHPEKAHRPDQPIQRKP. [4Fe-4S] cluster is bound by residues C60, C65, C71, C86, C90, C93, and S299. The Radical SAM core domain occupies 72 to 288; the sequence is WEKKHATFMI…ETTAYAKGFL (217 aa).

The protein belongs to the radical SAM superfamily. Lipoyl synthase family. [4Fe-4S] cluster serves as cofactor.

Its subcellular location is the cytoplasm. It catalyses the reaction [[Fe-S] cluster scaffold protein carrying a second [4Fe-4S](2+) cluster] + N(6)-octanoyl-L-lysyl-[protein] + 2 oxidized [2Fe-2S]-[ferredoxin] + 2 S-adenosyl-L-methionine + 4 H(+) = [[Fe-S] cluster scaffold protein] + N(6)-[(R)-dihydrolipoyl]-L-lysyl-[protein] + 4 Fe(3+) + 2 hydrogen sulfide + 2 5'-deoxyadenosine + 2 L-methionine + 2 reduced [2Fe-2S]-[ferredoxin]. Its pathway is protein modification; protein lipoylation via endogenous pathway; protein N(6)-(lipoyl)lysine from octanoyl-[acyl-carrier-protein]: step 2/2. Its function is as follows. Catalyzes the radical-mediated insertion of two sulfur atoms into the C-6 and C-8 positions of the octanoyl moiety bound to the lipoyl domains of lipoate-dependent enzymes, thereby converting the octanoylated domains into lipoylated derivatives. The polypeptide is Lipoyl synthase (Methylobacterium nodulans (strain LMG 21967 / CNCM I-2342 / ORS 2060)).